The chain runs to 79 residues: uncharacterized protein (79 aa).

Residues 3-54 form the TM2 domain; it reads SKKNKIVAALLAFFFGGLGIHKFYLGRVGQGILYILFCWTGIPSIIAFIEFI. The next 2 helical transmembrane spans lie at 8 to 28 and 37 to 57; these read IVAA…FYLG and ILFC…IIFL.

The protein localises to the cell membrane. This is an uncharacterized protein from Bacillus subtilis (strain 168).